The chain runs to 142 residues: Regulator of ribonuclease activity B (142 aa).

Residues 117-142 form a disordered region; sequence PNADEDEYGEDGEFFDDEFADDDEKR.

The protein belongs to the RraB family. As to quaternary structure, interacts with the C-terminal region of Rne.

It is found in the cytoplasm. Functionally, globally modulates RNA abundance by binding to RNase E (Rne) and regulating its endonucleolytic activity. Can modulate Rne action in a substrate-dependent manner by altering the composition of the degradosome. This is Regulator of ribonuclease activity B from Actinobacillus succinogenes (strain ATCC 55618 / DSM 22257 / CCUG 43843 / 130Z).